The chain runs to 557 residues: Laccase-11 (557 aa).

The first 23 residues, 1–23 (MKMGFLFLFCYLLAFLGYSPVDA), serve as a signal peptide directing secretion. 2 consecutive Plastocyanin-like domains span residues 31–147 (DVQV…PAPG) and 158–308 (ESNI…YKGV). Asparagine 36, asparagine 69, and asparagine 77 each carry an N-linked (GlcNAc...) asparagine glycan. Cu cation is bound by residues histidine 81 and histidine 83. Asparagine 115 carries N-linked (GlcNAc...) asparagine glycosylation. The Cu cation site is built by histidine 126 and histidine 128. Asparagine 240, asparagine 296, asparagine 323, asparagine 371, asparagine 381, asparagine 398, asparagine 416, and asparagine 440 each carry an N-linked (GlcNAc...) asparagine glycan. The Plastocyanin-like 3 domain occupies 406-541 (DFPDRPPKAF…KMAFVVENGE (136 aa)). Cu cation contacts are provided by histidine 458, histidine 461, histidine 463, histidine 520, cysteine 521, histidine 522, and histidine 526.

Belongs to the multicopper oxidase family. The cofactor is Cu cation. Ubiquitous and constitutive.

It localises to the secreted. The protein localises to the extracellular space. It is found in the apoplast. The enzyme catalyses 4 hydroquinone + O2 = 4 benzosemiquinone + 2 H2O. Lignin degradation and detoxification of lignin-derived products. This Arabidopsis thaliana (Mouse-ear cress) protein is Laccase-11 (LAC11).